A 2304-amino-acid polypeptide reads, in one-letter code: Protein Ycf2 (2304 aa).

1637 to 1644 contacts ATP; it reads GSIGTGRS.

It belongs to the Ycf2 family.

It is found in the plastid. The protein resides in the chloroplast stroma. Its function is as follows. Probable ATPase of unknown function. Its presence in a non-photosynthetic plant (Epifagus virginiana) and experiments in tobacco indicate that it has an essential function which is probably not related to photosynthesis. The sequence is that of Protein Ycf2 from Amborella trichopoda.